Here is a 321-residue protein sequence, read N- to C-terminus: Malate dehydrogenase (321 aa).

Residues 10–15 (GGGQIG) and D34 contribute to the NAD(+) site. Substrate contacts are provided by R83 and R89. NAD(+) contacts are provided by residues N96 and 119–121 (ISN). The substrate site is built by N121 and R152. The Proton acceptor role is filled by H176.

The protein belongs to the LDH/MDH superfamily. MDH type 3 family.

The enzyme catalyses (S)-malate + NAD(+) = oxaloacetate + NADH + H(+). Catalyzes the reversible oxidation of malate to oxaloacetate. The chain is Malate dehydrogenase from Trichlorobacter lovleyi (strain ATCC BAA-1151 / DSM 17278 / SZ) (Geobacter lovleyi).